Reading from the N-terminus, the 181-residue chain is Putative manganese efflux pump MntP (181 aa).

6 helical membrane passes run 4–24 (VVLL…GLGA), 31–51 (VVLG…MPLI), 59–79 (MLGW…ALIA), 102–122 (VLLL…FALT), 129–149 (LVSC…GVFI), and 161–181 (AELA…AVAV).

Belongs to the MntP (TC 9.B.29) family.

It localises to the cell inner membrane. In terms of biological role, probably functions as a manganese efflux pump. This is Putative manganese efflux pump MntP from Saccharophagus degradans (strain 2-40 / ATCC 43961 / DSM 17024).